The sequence spans 389 residues: S-adenosylmethionine synthase (389 aa).

ATP is bound at residue His-17. Asp-19 serves as a coordination point for Mg(2+). Glu-45 is a binding site for K(+). Residues Glu-58 and Gln-101 each contribute to the L-methionine site. Positions 101–111 are flexible loop; it reads QSPDIAQGVTE. ATP contacts are provided by residues 168 to 170, 234 to 235, Asp-243, 249 to 250, Ala-266, and Lys-270; these read DSK, RF, and RK. Residue Asp-243 participates in L-methionine binding. An L-methionine-binding site is contributed by Lys-274.

The protein belongs to the AdoMet synthase family. In terms of assembly, homotetramer; dimer of dimers. Requires Mg(2+) as cofactor. It depends on K(+) as a cofactor.

The protein resides in the cytoplasm. It carries out the reaction L-methionine + ATP + H2O = S-adenosyl-L-methionine + phosphate + diphosphate. The protein operates within amino-acid biosynthesis; S-adenosyl-L-methionine biosynthesis; S-adenosyl-L-methionine from L-methionine: step 1/1. Functionally, catalyzes the formation of S-adenosylmethionine (AdoMet) from methionine and ATP. The overall synthetic reaction is composed of two sequential steps, AdoMet formation and the subsequent tripolyphosphate hydrolysis which occurs prior to release of AdoMet from the enzyme. This is S-adenosylmethionine synthase from Geotalea uraniireducens (strain Rf4) (Geobacter uraniireducens).